Here is a 216-residue protein sequence, read N- to C-terminus: DNA-directed RNA polymerase subunit alpha (216 aa).

The protein belongs to the RNA polymerase alpha chain family. In plastids the minimal PEP RNA polymerase catalytic core is composed of four subunits: alpha, beta, beta', and beta''. When a (nuclear-encoded) sigma factor is associated with the core the holoenzyme is formed, which can initiate transcription.

The protein localises to the plastid. It localises to the chloroplast. The catalysed reaction is RNA(n) + a ribonucleoside 5'-triphosphate = RNA(n+1) + diphosphate. Functionally, DNA-dependent RNA polymerase catalyzes the transcription of DNA into RNA using the four ribonucleoside triphosphates as substrates. This is DNA-directed RNA polymerase subunit alpha (rpoA) from Euglena gracilis.